Reading from the N-terminus, the 166-residue chain is Replication restart protein DnaT (166 aa).

The protein belongs to the DnaT family. In terms of assembly, homooligomerizes. Interacts with PriB. Component of the replication restart primosome. Primosome assembly occurs via a 'hand-off' mechanism. PriA binds to replication forks, subsequently PriB then DnaT bind; DnaT then displaces ssDNA to generate the helicase loading substrate.

Functionally, involved in the restart of stalled replication forks, which reloads the replicative helicase on sites other than the origin of replication. Can function in multiple replication restart pathways. Displaces ssDNA from a PriB-ssDNA complex. Probably forms a spiral filament on ssDNA. In Buchnera aphidicola subsp. Schizaphis graminum (strain Sg), this protein is Replication restart protein DnaT.